Here is a 522-residue protein sequence, read N- to C-terminus: Wax ester synthase/diacylglycerol acyltransferase 4 (522 aa).

Residues 1–12 are compositionally biased toward basic and acidic residues; it reads MEIETRPHISGD. Positions 1–20 are disordered; it reads MEIETRPHISGDEKEEEQPL. Residues 1 to 205 are Cytoplasmic-facing; it reads MEIETRPHIS…SDSRLLWLVK (205 aa). H149 serves as the catalytic Proton acceptor. A helical membrane pass occupies residues 206-226; sequence VIWTAVILGLNTVCDALEFIV. Residues 227-522 lie on the Lumenal side of the membrane; it reads TTLFVKDTET…QIAGLLYRML (296 aa). N270 and N409 each carry an N-linked (GlcNAc...) asparagine glycan.

In the N-terminal section; belongs to the long-chain O-acyltransferase family. In terms of tissue distribution, mostly expressed in roots, flowers and siliques.

It localises to the cell membrane. The protein resides in the endoplasmic reticulum membrane. It carries out the reaction an acyl-CoA + a 1,2-diacyl-sn-glycerol = a triacyl-sn-glycerol + CoA. The enzyme catalyses a long chain fatty alcohol + a fatty acyl-CoA = a wax ester + CoA. The protein operates within glycerolipid metabolism; triacylglycerol biosynthesis. It functions in the pathway lipid metabolism. Its function is as follows. Bifunctional wax ester synthase/diacylglycerol acyltransferase. Involved in cuticular wax biosynthesis. The polypeptide is Wax ester synthase/diacylglycerol acyltransferase 4 (Arabidopsis thaliana (Mouse-ear cress)).